The chain runs to 393 residues: Probable RNA methyltransferase sce3898 (393 aa).

The active-site Proton acceptor is E82. Positions R90–R329 constitute a Radical SAM core domain. A disulfide bridge connects residues C97 and C353. The [4Fe-4S] cluster site is built by C104, C108, and C111. S-adenosyl-L-methionine-binding positions include G157 to E158, S212 to G214, and N294. C353 (S-methylcysteine intermediate) is an active-site residue. Residues A357–A393 are disordered. Low complexity predominate over residues P373–A382.

The protein belongs to the radical SAM superfamily. RlmN family. The cofactor is [4Fe-4S] cluster.

The protein resides in the cytoplasm. The chain is Probable RNA methyltransferase sce3898 from Sorangium cellulosum (strain So ce56) (Polyangium cellulosum (strain So ce56)).